Reading from the N-terminus, the 60-residue chain is Large ribosomal subunit protein bL32 (60 aa).

Residues M1–D60 are disordered. The span at K7–R16 shows a compositional bias: basic residues. Over residues L22–K31 the composition is skewed to polar residues.

The protein belongs to the bacterial ribosomal protein bL32 family.

This Francisella tularensis subsp. tularensis (strain SCHU S4 / Schu 4) protein is Large ribosomal subunit protein bL32.